The sequence spans 358 residues: Electron transfer flavoprotein subunit alpha, mitochondrial (358 aa).

An FAD-binding site is contributed by 298-326 (LYMAFGVSGAIQHLAGMRDSKVIVAVNKD).

The protein belongs to the ETF alpha-subunit/FixB family. In terms of assembly, heterodimer of an alpha and a beta subunit. FAD serves as cofactor.

It is found in the mitochondrion matrix. Functionally, the electron transfer flavoprotein serves as a specific electron acceptor for several dehydrogenases, including five acyl-CoA dehydrogenases, glutaryl-CoA and sarcosine dehydrogenase. It transfers the electrons to the main mitochondrial respiratory chain via ETF-ubiquinone oxidoreductase (ETF dehydrogenase). The polypeptide is Electron transfer flavoprotein subunit alpha, mitochondrial (ETFA) (Oryza sativa subsp. indica (Rice)).